Consider the following 313-residue polypeptide: Aspartate carbamoyltransferase catalytic subunit (313 aa).

Carbamoyl phosphate-binding residues include R61 and T62. L-aspartate is bound at residue K89. Carbamoyl phosphate contacts are provided by R111, H139, and Q142. L-aspartate is bound by residues R172 and R227. Residues G268 and P269 each coordinate carbamoyl phosphate.

This sequence belongs to the aspartate/ornithine carbamoyltransferase superfamily. ATCase family. Heterododecamer (2C3:3R2) of six catalytic PyrB chains organized as two trimers (C3), and six regulatory PyrI chains organized as three dimers (R2).

The catalysed reaction is carbamoyl phosphate + L-aspartate = N-carbamoyl-L-aspartate + phosphate + H(+). The protein operates within pyrimidine metabolism; UMP biosynthesis via de novo pathway; (S)-dihydroorotate from bicarbonate: step 2/3. Its function is as follows. Catalyzes the condensation of carbamoyl phosphate and aspartate to form carbamoyl aspartate and inorganic phosphate, the committed step in the de novo pyrimidine nucleotide biosynthesis pathway. The sequence is that of Aspartate carbamoyltransferase catalytic subunit from Gluconobacter oxydans (strain 621H) (Gluconobacter suboxydans).